The following is a 604-amino-acid chain: Protein CBFA2T2 (604 aa).

Positions 25–105 (KRVPAMPGSP…SSTSSALTNQ (81 aa)) are disordered. A Phosphoserine modification is found at Ser-33. Residue Lys-38 forms a Glycyl lysine isopeptide (Lys-Gly) (interchain with G-Cter in SUMO2) linkage. The segment covering 46–59 (PTMPPLPPINPGGP) has biased composition (pro residues). Polar residues-rich tracts occupy residues 64-79 (FTPTALSNGINHSPPT) and 88-105 (QRFSNGPASSTSSALTNQ). Residues 107 to 215 (LPATCGARQL…QHEHLLLNTS (109 aa)) form an interaction with PRDM14 region. The 96-residue stretch at 113–208 (ARQLSKLKRF…TPSQYLAQHE (96 aa)) folds into the TAFH domain. The tract at residues 229–265 (VHGNGKRPSPERREENSFDRDTIAPEPPAKRVCTISP) is disordered. Residues 236–251 (PSPERREENSFDRDTI) show a composition bias toward basic and acidic residues. Ser-264 carries the phosphoserine modification. Residues 331–377 (QDELVDHRLTEREWADEWKHLDHALNCIMEMVEKTRRSMAVLRRCQE) form a nervy homology region 2 (NHR2) region. Residues 397 to 427 (RKTGTELVSRQHSPGSADSLSNDSQREFNSR) are disordered. Residues 402–419 (ELVSRQHSPGSADSLSND) are compositionally biased toward polar residues. Ser-409 is subject to Phosphoserine. Residues 435–484 (VEFWKKTEEAVNKVKIQAMSEVQKAVAEAEQKAFEVIATERARMEQTIAD) form a nervy homology region 3 (NHR3) region. Lys-449 is covalently cross-linked (Glycyl lysine isopeptide (Lys-Gly) (interchain with G-Cter in SUMO2)). Positions 451–491 (QAMSEVQKAVAEAEQKAFEVIATERARMEQTIADVKRQAAE) form a coiled coil. The Zn(2+) site is built by Cys-507, Cys-510, Cys-518, Cys-521, Cys-527, Cys-531, His-539, and Cys-543. The segment at 507-543 (CWNCGRKASETCSGCNIARYCGSFCQHKDWERHHRLC) adopts an MYND-type zinc-finger fold. The disordered stretch occupies residues 547 to 604 (LHGQSPHGQGRPLLPVGRGSSARSADCSVPSPALDKTSATTSRSSTPASVTAIDTNGL). Residue Ser-577 is modified to Phosphoserine. The segment covering 583–598 (TSATTSRSSTPASVTA) has biased composition (low complexity).

It belongs to the CBFA2T family. As to quaternary structure, homooligomer. Homotetramerization is mediated by nervy homology region 2. Can interact with RUNX1T1/CBFA2T1 and CBFA2T3/MTG16; heterotetramerization between members of the CBFA2T family is proposed. Forms a heterooligomer with the AML1-MTG8/ETO fusion protein. Interacts with PRDM14. Interacts with RBPJ, GFI1, TCF4. Interacts with TAL1 and CBFA2T3/MTG16; the heteromer with CBFA2T3/MTG16 may function in repression of TAL1. In terms of tissue distribution, ubiquitously expressed in fetal and adult tissues. Highly expressed in adult brain, heart, lung, kidney, lymph node, appendix, thymus, testis, uterus, small intestine, prostate and thymus.

The protein resides in the nucleus. Functionally, transcriptional corepressor which facilitates transcriptional repression via its association with DNA-binding transcription factors and recruitment of other corepressors and histone-modifying enzymes. Via association with PRDM14 is involved in regulation of embryonic stem cell (ESC) pluripotency. Involved in primordial germ cell (PCG) formation. Stabilizes PRDM14 and OCT4 on chromatin in a homooligomerization-dependent manner. Can repress the expression of MMP7 in a ZBTB33-dependent manner. May function as a complex with the chimeric protein RUNX1/AML1-CBFA2T1/MTG8 (AML1-MTG8/ETO fusion protein) which is produced in acute myeloid leukemia with the chromosomal translocation t(8;21). May thus be involved in the repression of AML1-dependent transcription and the induction of G-CSF/CSF3-dependent cell growth. May be a tumor suppressor gene candidate involved in myeloid tumors with the deletion of the 20q11 region. Through heteromerization with CBFA2T3/MTG16 may be involved in regulation of the proliferation and the differentiation of erythroid progenitors by repressing the expression of TAL1 target genes. Required for the maintenance of the secretory cell lineage in the small intestine. Can inhibit Notch signaling probably by association with RBPJ and may be involved in GFI1-mediated Paneth cell differentiation. This chain is Protein CBFA2T2 (CBFA2T2), found in Homo sapiens (Human).